Here is a 232-residue protein sequence, read N- to C-terminus: Large ribosomal subunit protein uL1 (232 aa).

The protein belongs to the universal ribosomal protein uL1 family. Part of the 50S ribosomal subunit.

Functionally, binds directly to 23S rRNA. The L1 stalk is quite mobile in the ribosome, and is involved in E site tRNA release. Its function is as follows. Protein L1 is also a translational repressor protein, it controls the translation of the L11 operon by binding to its mRNA. This chain is Large ribosomal subunit protein uL1, found in Hahella chejuensis (strain KCTC 2396).